Consider the following 228-residue polypeptide: Ribonuclease HII (228 aa).

Residues 26–214 (RAVAGVDEVG…VRAHSRFPLD (189 aa)) form the RNase H type-2 domain. Positions 32, 33, and 124 each coordinate a divalent metal cation.

Belongs to the RNase HII family. Mn(2+) is required as a cofactor. Mg(2+) serves as cofactor.

The protein resides in the cytoplasm. It catalyses the reaction Endonucleolytic cleavage to 5'-phosphomonoester.. Functionally, endonuclease that specifically degrades the RNA of RNA-DNA hybrids. In Solibacter usitatus (strain Ellin6076), this protein is Ribonuclease HII.